The following is a 216-amino-acid chain: Uracil phosphoribosyltransferase (216 aa).

A GTP-binding site is contributed by 30-34 (KNLVK). Residues arginine 80, arginine 105, and 140–148 (DPMIATGST) contribute to the 5-phospho-alpha-D-ribose 1-diphosphate site. Residues isoleucine 203 and 208 to 210 (GDA) contribute to the uracil site. 5-phospho-alpha-D-ribose 1-diphosphate is bound at residue aspartate 209.

The protein belongs to the UPRTase family. Requires Mg(2+) as cofactor.

It carries out the reaction UMP + diphosphate = 5-phospho-alpha-D-ribose 1-diphosphate + uracil. The protein operates within pyrimidine metabolism; UMP biosynthesis via salvage pathway; UMP from uracil: step 1/1. Its activity is regulated as follows. Allosterically activated by GTP. Its function is as follows. Catalyzes the conversion of uracil and 5-phospho-alpha-D-ribose 1-diphosphate (PRPP) to UMP and diphosphate. This Sulfolobus acidocaldarius (strain ATCC 33909 / DSM 639 / JCM 8929 / NBRC 15157 / NCIMB 11770) protein is Uracil phosphoribosyltransferase.